Here is a 280-residue protein sequence, read N- to C-terminus: Phosphatidylserine decarboxylase proenzyme (280 aa).

Residues aspartate 88, histidine 144, and serine 247 each act as charge relay system; for autoendoproteolytic cleavage activity in the active site. Serine 247 acts as the Schiff-base intermediate with substrate; via pyruvic acid; for decarboxylase activity in catalysis. A Pyruvic acid (Ser); by autocatalysis modification is found at serine 247.

It belongs to the phosphatidylserine decarboxylase family. PSD-B subfamily. Prokaryotic type I sub-subfamily. Heterodimer of a large membrane-associated beta subunit and a small pyruvoyl-containing alpha subunit. Pyruvate serves as cofactor. Is synthesized initially as an inactive proenzyme. Formation of the active enzyme involves a self-maturation process in which the active site pyruvoyl group is generated from an internal serine residue via an autocatalytic post-translational modification. Two non-identical subunits are generated from the proenzyme in this reaction, and the pyruvate is formed at the N-terminus of the alpha chain, which is derived from the carboxyl end of the proenzyme. The autoendoproteolytic cleavage occurs by a canonical serine protease mechanism, in which the side chain hydroxyl group of the serine supplies its oxygen atom to form the C-terminus of the beta chain, while the remainder of the serine residue undergoes an oxidative deamination to produce ammonia and the pyruvoyl prosthetic group on the alpha chain. During this reaction, the Ser that is part of the protease active site of the proenzyme becomes the pyruvoyl prosthetic group, which constitutes an essential element of the active site of the mature decarboxylase.

It is found in the cell membrane. It carries out the reaction a 1,2-diacyl-sn-glycero-3-phospho-L-serine + H(+) = a 1,2-diacyl-sn-glycero-3-phosphoethanolamine + CO2. It participates in phospholipid metabolism; phosphatidylethanolamine biosynthesis; phosphatidylethanolamine from CDP-diacylglycerol: step 2/2. Catalyzes the formation of phosphatidylethanolamine (PtdEtn) from phosphatidylserine (PtdSer). The polypeptide is Phosphatidylserine decarboxylase proenzyme (Xanthomonas axonopodis pv. citri (strain 306)).